Here is a 226-residue protein sequence, read N- to C-terminus: Putative 5'-nucleotidase alr3139 (226 aa).

Residues D8, D9, S38, and N89 each coordinate a divalent metal cation.

Belongs to the SurE nucleotidase family. The cofactor is a divalent metal cation.

It localises to the cytoplasm. The enzyme catalyses a ribonucleoside 5'-phosphate + H2O = a ribonucleoside + phosphate. Functionally, nucleotidase that shows phosphatase activity on nucleoside 5'-monophosphates. This chain is Putative 5'-nucleotidase alr3139, found in Nostoc sp. (strain PCC 7120 / SAG 25.82 / UTEX 2576).